The sequence spans 1073 residues: Probable inorganic carbon transporter subunit DabA 2 (1073 aa).

Residues 1–20 show a composition bias toward polar residues; that stretch reads MSSGNTSSQNHSPVNNQPTR. The disordered stretch occupies residues 1–35; the sequence is MSSGNTSSQNHSPVNNQPTRLKSPLPALHKDTQPN. The Zn(2+) site is built by Cys535, Asp537, His721, and Cys736.

The protein belongs to the inorganic carbon transporter (TC 9.A.2) DabA family. Forms a complex with DabB. The cofactor is Zn(2+).

The protein localises to the cell inner membrane. Part of an energy-coupled inorganic carbon pump. The sequence is that of Probable inorganic carbon transporter subunit DabA 2 from Rhodopirellula baltica (strain DSM 10527 / NCIMB 13988 / SH1).